The primary structure comprises 282 residues: PILR alpha-associated neural protein (282 aa).

The N-terminal stretch at Met1–Gly31 is a signal peptide. The tract at residues Pro28–Ser99 is disordered. Residues Ser32–Pro178 are Extracellular-facing. A compositionally biased stretch (low complexity) spans Pro46 to Arg56. A glycan (O-linked (GalNAc...) threonine) is linked at Thr140. A helical membrane pass occupies residues Gln179–Phe199. Topologically, residues Lys200 to Leu282 are cytoplasmic. A disordered region spans residues Arg209–Leu282. Over residues Ser213 to Thr229 the composition is skewed to polar residues.

Post-translationally, O-glycosylation at Thr-140 is essential for recognition by PILRA. Mainly expressed in adult brain and cerebellum. Weaker expression in fetal brain and virtually no expression in spleen, heart, kidney, liver and dorsal ganglion relative to brain.

Its subcellular location is the membrane. In terms of biological role, acts as a ligand for PILRA in neural tissues, where it may be involved in immune regulation. The chain is PILR alpha-associated neural protein (PIANP) from Homo sapiens (Human).